We begin with the raw amino-acid sequence, 151 residues long: MTEIERKFLVATFPDGELHAVPLRQGYLTTPTDSIELRLRQQGTEYFMTLKSEGGLSRQEYEIQIDVTQFEMLWPATEGRRVEKTRYSGKLPDGQLFELDVFAGHLSPLMLVEVEFLSEDAAQAFIPPPWFGEEVTEDKRYKNKALALSIP.

The 148-residue stretch at 1–148 (MTEIERKFLV…KRYKNKALAL (148 aa)) folds into the CYTH domain. The Proton acceptor role is filled by tyrosine 27.

In terms of assembly, homodimer.

It carries out the reaction triphosphate + H2O = phosphate + diphosphate. Activated by magnesium and mangenese ions, and inhibited by calcium, zinc and copper ions. In terms of biological role, involved in the hydrolysis of the beta-gamma-phosphoanhydride linkage of triphosphate-containing substrates (inorganic or nucleoside-linked). Catalyzes the hydrolysis of inorganic triphosphate (PPPi). The enzyme has a strong preference for linear PPPi compared with cyclic PPPi (cyclic trimetaphosphate) and to the linear P4. The longer chains polyphosphate are not hydrolyzed. It has only a slight thiamine triphosphatase (ThTPase) activity. Nucleoside triphosphatase activity is negligible in the presence of magnesium, but a small activity is observed in the presence of manganese, in particular with GTP. The sequence is that of Inorganic triphosphatase from Nitrosomonas europaea (strain ATCC 19718 / CIP 103999 / KCTC 2705 / NBRC 14298).